The primary structure comprises 124 residues: Small ribosomal subunit protein uS12c (124 aa).

The tract at residues 1–28 (MPTFQQLVRSARKPHAKKTKSPALQGCP) is disordered. Over residues 10 to 20 (SARKPHAKKTK) the composition is skewed to basic residues.

This sequence belongs to the universal ribosomal protein uS12 family. Part of the 30S ribosomal subunit.

It is found in the plastid. With S4 and S5 plays an important role in translational accuracy. Located at the interface of the 30S and 50S subunits. This chain is Small ribosomal subunit protein uS12c (rps12), found in Prototheca wickerhamii.